Reading from the N-terminus, the 64-residue chain is Delta-buthitoxin-Hj2a (64 aa).

Intrachain disulfides connect Cys-12–Cys-63, Cys-16–Cys-36, Cys-22–Cys-46, and Cys-26–Cys-48. Arg-64 is modified (arginine amide).

Belongs to the long (4 C-C) scorpion toxin superfamily. Sodium channel inhibitor family. Alpha subfamily. In terms of tissue distribution, expressed by the venom gland.

The protein localises to the secreted. Its function is as follows. This non-amidated recombinant toxin slows fast inactivation on Nav1.1/SCN1A (EC(50)=52.8 nM), Nav1.4/SN4A (EC(50)=32 nM), Nav1.5/SCN5A (EC(50)=116.7 nM), Nav1.6/SCN8A (EC(50)=46.3 nM), and Nav1.7/SCN9A (EC(50)=147.4 nM) voltage-gated sodium channels. On Nav1.1/SCN1A channel, acts as an agonist by inducing a shift in both the voltage dependence of channel inactivation (alpha-toxin activity) and activation (beta-toxin activity). In Hottentotta judaicus (Black scorpion), this protein is Delta-buthitoxin-Hj2a.